Reading from the N-terminus, the 675-residue chain is DNA ligase (675 aa).

NAD(+)-binding positions include 41–45, 90–91, and Glu-120; these read DAEYD and SL. The active-site N6-AMP-lysine intermediate is Lys-122. NAD(+) contacts are provided by Arg-143, Glu-178, Lys-295, and Lys-319. Cys-413, Cys-416, Cys-431, and Cys-436 together coordinate Zn(2+). The BRCT domain occupies 596-675; that stretch reads GVPQTFAGKT…ADFLQLIDRV (80 aa).

It belongs to the NAD-dependent DNA ligase family. LigA subfamily. The cofactor is Mg(2+). Requires Mn(2+) as cofactor.

It carries out the reaction NAD(+) + (deoxyribonucleotide)n-3'-hydroxyl + 5'-phospho-(deoxyribonucleotide)m = (deoxyribonucleotide)n+m + AMP + beta-nicotinamide D-nucleotide.. Its function is as follows. DNA ligase that catalyzes the formation of phosphodiester linkages between 5'-phosphoryl and 3'-hydroxyl groups in double-stranded DNA using NAD as a coenzyme and as the energy source for the reaction. It is essential for DNA replication and repair of damaged DNA. In Heliobacterium modesticaldum (strain ATCC 51547 / Ice1), this protein is DNA ligase.